The sequence spans 316 residues: Probable cell division protein WhiA (316 aa).

A DNA-binding region (H-T-H motif) is located at residues 280 to 313; the sequence is SLKELGEMLEPPVGKSGVNHRLRKIEKIAEELRT.

This sequence belongs to the WhiA family.

Its function is as follows. Involved in cell division and chromosome segregation. The polypeptide is Probable cell division protein WhiA (Clostridium perfringens (strain 13 / Type A)).